The primary structure comprises 204 residues: MDASSIPQINIEDFDGLEVAPDDHLRNLKALTEKLRLETRRPSYLEWKERVEAQNTKGLAVSDGSTELEKDAGLKPRATPQRTIEDSQMTAGNGLISRSLGGFDNIDEALVWLRKELMEMRIQDQQLARQLMRLRGDINKLKVEQTCHLHRRMLNDATFGLEERDELSDLLCDGPVTPGFGLSSPLRLIGVTKMNINSRRFSLC.

A disordered region spans residues 58–80 (GLAVSDGSTELEKDAGLKPRATP). The stretch at 113–146 (LRKELMEMRIQDQQLARQLMRLRGDINKLKVEQT) forms a coiled coil.

The protein belongs to the FAM167 (SEC) family.

The sequence is that of Protein FAM167A (fam167a) from Danio rerio (Zebrafish).